The chain runs to 543 residues: Membrane protein insertase YidC (543 aa).

A helical membrane pass occupies residues 7–27 (FLLIGLAMVSFLLWQQWQVDY). A disordered region spans residues 30-61 (QPAQPVESQQTTGSDAPNSNGDVPIATPTNKS). Over residues 35–61 (VESQQTTGSDAPNSNGDVPIATPTNKS) the composition is skewed to polar residues. 4 helical membrane-spanning segments follow: residues 341–361 (FAFL…IILI), 421–441 (GGCF…WVLL), 451–471 (FIFW…PILT), and 499–519 (PVAM…YWLI).

This sequence belongs to the OXA1/ALB3/YidC family. Type 1 subfamily. As to quaternary structure, interacts with the Sec translocase complex via SecD. Specifically interacts with transmembrane segments of nascent integral membrane proteins during membrane integration.

It is found in the cell inner membrane. Functionally, required for the insertion and/or proper folding and/or complex formation of integral membrane proteins into the membrane. Involved in integration of membrane proteins that insert both dependently and independently of the Sec translocase complex, as well as at least some lipoproteins. Aids folding of multispanning membrane proteins. The chain is Membrane protein insertase YidC from Pseudoalteromonas atlantica (strain T6c / ATCC BAA-1087).